A 128-amino-acid chain; its full sequence is Putative histidinol dehydrogenase (128 aa).

Residues 21 to 84 (QRPDIAPRHH…EGQEKASGRR (64 aa)) are disordered. Basic and acidic residues-rich tracts occupy residues 34-50 (HRAEREAVEADRSRRTA) and 72-81 (QGREGQEKAS).

Belongs to the histidinol dehydrogenase family.

The enzyme catalyses L-histidinol + 2 NAD(+) + H2O = L-histidine + 2 NADH + 3 H(+). It functions in the pathway amino-acid biosynthesis; L-histidine biosynthesis; L-histidine from 5-phospho-alpha-D-ribose 1-diphosphate: step 9/9. Its function is as follows. Catalyzes the sequential NAD-dependent oxidations of L-histidinol to L-histidinaldehyde and then to L-histidine. The chain is Putative histidinol dehydrogenase (hisD) from Azospirillum brasilense.